The chain runs to 620 residues: Protein regulator of cytokinesis 1 (620 aa).

The tract at residues 1–303 is required for the interaction with KIF4A; it reads MRRSEVLAEE…IEAIRVELVQ (303 aa). Positions 1–341 are dimerization; that stretch reads MRRSEVLAEE…QLHDAEIVRL (341 aa). Coiled-coil stretches lie at residues 96–133, 211–304, and 383–463; these read ILQL…ELCE, SLEN…LVQY, and GNLL…TEML. The segment at 342 to 466 is spectrin-fold; that stretch reads KNYYEVHKEL…QTETEMLYGS (125 aa). Positions 446-459 are enriched in basic and acidic residues; sequence AKQERQLKNKKQTE. The interval 446 to 488 is disordered; the sequence is AKQERQLKNKKQTETEMLYGSAPRTPSKRRGLAPNTPGKARKL. Positions 467–620 are unstructured, Arg/Lys rich; that stretch reads APRTPSKRRG…GILNSTNIQS (154 aa). Residues threonine 470 and threonine 481 each carry the phosphothreonine; by CDK1 modification. Residues serine 513, arginine 541, and serine 571 each carry the phosphoserine modification. Positions 517-545 are disordered; sequence RLPPSGSKPVAASTCSGKKTPRTGRHGAN. Threonine 578 carries the post-translational modification Phosphothreonine. The disordered stretch occupies residues 600-620; sequence LSKASKSDATSGILNSTNIQS. Residues 606–620 show a composition bias toward polar residues; that stretch reads SDATSGILNSTNIQS. A Phosphothreonine; by PLK1 modification is found at threonine 616.

This sequence belongs to the MAP65/ASE1 family. In terms of assembly, homodimer. Interacts with the C-terminal Rho-GAP domain and the basic region of RACGAP1. The interaction with RACGAP1 inhibits its GAP activity towards CDC42 in vitro, which may be required for maintaining normal spindle morphology. Interacts (via N-terminus) with the C-terminus of CENPE (via C-terminus); the interaction occurs during late mitosis. Interacts (via N-terminus) with KIF4A (via C-terminus); the interaction is required for the progression of mitosis. Interacts (via N-terminus) with KIF23 (via C-terminus); the interaction occurs during late mitosis. Interacts with KIF14 and KIF20A. Interacts with PLK1. Interacts with KIF20B. Interacts with CCDC66. In terms of processing, phosphorylation by CDK1 in early mitosis holds PRC1 in an inactive monomeric state, during the metaphase to anaphase transition, PRC1 is dephosphorylated, promoting interaction with KIF4A, which then translocates PRC1 along mitotic spindles to the plus ends of antiparallel interdigitating microtubules. Dephosphorylation also promotes MT-bundling activity by allowing dimerization. Phosphorylation by CDK1 prevents PLK1-binding: upon degradation of CDK1 at anaphase and dephosphorylation, it is then phosphorylated by PLK1, leading to cytokinesis. Overexpressed in bladder cancer cells.

It is found in the nucleus. Its subcellular location is the cytoplasm. The protein resides in the cytoskeleton. It localises to the spindle pole. The protein localises to the midbody. It is found in the chromosome. In terms of biological role, key regulator of cytokinesis that cross-links antiparrallel microtubules at an average distance of 35 nM. Essential for controlling the spatiotemporal formation of the midzone and successful cytokinesis. Required for KIF14 localization to the central spindle and midbody. Required to recruit PLK1 to the spindle. Stimulates PLK1 phosphorylation of RACGAP1 to allow recruitment of ECT2 to the central spindle. Acts as an oncogene for promoting bladder cancer cells proliferation, apoptosis inhibition and carcinogenic progression. This is Protein regulator of cytokinesis 1 from Homo sapiens (Human).